A 354-amino-acid chain; its full sequence is Probable L-ascorbate-6-phosphate lactonase UlaG (354 aa).

Belongs to the UlaG family. A divalent metal cation is required as a cofactor.

It is found in the cytoplasm. It carries out the reaction L-ascorbate 6-phosphate + H2O = 3-dehydro-L-gulonate 6-phosphate. It participates in cofactor degradation; L-ascorbate degradation; D-xylulose 5-phosphate from L-ascorbate: step 1/4. Its function is as follows. Probably catalyzes the hydrolysis of L-ascorbate-6-P into 3-keto-L-gulonate-6-P. Is essential for L-ascorbate utilization under anaerobic conditions. The chain is Probable L-ascorbate-6-phosphate lactonase UlaG from Shigella dysenteriae serotype 1 (strain Sd197).